A 217-amino-acid chain; its full sequence is Protein LURP-one-related 15 (217 aa).

Position 1 is an N-acetylmethionine (Met-1).

This sequence belongs to the LOR family.

In terms of biological role, might be related to the phospholipid scramblase and tubby-like superfamily of membrane tethered transcription factors. The protein is Protein LURP-one-related 15 of Arabidopsis thaliana (Mouse-ear cress).